Consider the following 64-residue polypeptide: Short neurotoxin 1 (64 aa).

4 cysteine pairs are disulfide-bonded: cysteine 3/cysteine 26, cysteine 20/cysteine 43, cysteine 45/cysteine 56, and cysteine 57/cysteine 62.

The protein belongs to the three-finger toxin family. Short-chain subfamily. Type I alpha-neurotoxin sub-subfamily. As to expression, expressed by the venom gland.

The protein localises to the secreted. Binds to muscle nicotinic acetylcholine receptor (nAChR) and inhibit acetylcholine from binding to the receptor, thereby impairing neuromuscular transmission. The sequence is that of Short neurotoxin 1 from Bungarus fasciatus (Banded krait).